The chain runs to 329 residues: Ketol-acid reductoisomerase (NADP(+)) (329 aa).

The region spanning 2-182 (TQLFYDTDAD…GGTRAGILET (181 aa)) is the KARI N-terminal Rossmann domain. Residues 25 to 28 (YGSQ), S51, S53, and 83 to 86 (DEFQ) contribute to the NADP(+) site. Residue H108 is part of the active site. G134 is an NADP(+) binding site. A KARI C-terminal knotted domain is found at 183 to 328 (NFKEETETDL…KGLRSMFSWL (146 aa)). Residues D191, E195, E227, and E231 each contribute to the Mg(2+) site. Residue S252 coordinates substrate.

This sequence belongs to the ketol-acid reductoisomerase family. Mg(2+) is required as a cofactor.

The catalysed reaction is (2R)-2,3-dihydroxy-3-methylbutanoate + NADP(+) = (2S)-2-acetolactate + NADPH + H(+). It carries out the reaction (2R,3R)-2,3-dihydroxy-3-methylpentanoate + NADP(+) = (S)-2-ethyl-2-hydroxy-3-oxobutanoate + NADPH + H(+). Its pathway is amino-acid biosynthesis; L-isoleucine biosynthesis; L-isoleucine from 2-oxobutanoate: step 2/4. It functions in the pathway amino-acid biosynthesis; L-valine biosynthesis; L-valine from pyruvate: step 2/4. Functionally, involved in the biosynthesis of branched-chain amino acids (BCAA). Catalyzes an alkyl-migration followed by a ketol-acid reduction of (S)-2-acetolactate (S2AL) to yield (R)-2,3-dihydroxy-isovalerate. In the isomerase reaction, S2AL is rearranged via a Mg-dependent methyl migration to produce 3-hydroxy-3-methyl-2-ketobutyrate (HMKB). In the reductase reaction, this 2-ketoacid undergoes a metal-dependent reduction by NADPH to yield (R)-2,3-dihydroxy-isovalerate. This chain is Ketol-acid reductoisomerase (NADP(+)), found in Prochlorococcus marinus (strain MIT 9312).